The sequence spans 196 residues: ATP-dependent Clp protease proteolytic subunit (196 aa).

Serine 99 serves as the catalytic Nucleophile. Histidine 124 is an active-site residue.

Belongs to the peptidase S14 family. As to quaternary structure, fourteen ClpP subunits assemble into 2 heptameric rings which stack back to back to give a disk-like structure with a central cavity, resembling the structure of eukaryotic proteasomes.

The protein localises to the cytoplasm. The enzyme catalyses Hydrolysis of proteins to small peptides in the presence of ATP and magnesium. alpha-casein is the usual test substrate. In the absence of ATP, only oligopeptides shorter than five residues are hydrolyzed (such as succinyl-Leu-Tyr-|-NHMec, and Leu-Tyr-Leu-|-Tyr-Trp, in which cleavage of the -Tyr-|-Leu- and -Tyr-|-Trp bonds also occurs).. Its function is as follows. Cleaves peptides in various proteins in a process that requires ATP hydrolysis. Has a chymotrypsin-like activity. Plays a major role in the degradation of misfolded proteins. The sequence is that of ATP-dependent Clp protease proteolytic subunit from Helicobacter pylori (strain ATCC 700392 / 26695) (Campylobacter pylori).